A 203-amino-acid chain; its full sequence is Guanylate kinase (203 aa).

The region spanning 3–181 (GSLFIVAAPS…AHTDLRAIVQ (179 aa)) is the Guanylate kinase-like domain. An ATP-binding site is contributed by 10–17 (APSGAGKT).

Belongs to the guanylate kinase family.

The protein localises to the cytoplasm. It carries out the reaction GMP + ATP = GDP + ADP. Its function is as follows. Essential for recycling GMP and indirectly, cGMP. This Nitrosococcus oceani (strain ATCC 19707 / BCRC 17464 / JCM 30415 / NCIMB 11848 / C-107) protein is Guanylate kinase.